The following is a 384-amino-acid chain: Chaperone protein DnaJ 1 (384 aa).

The J domain maps to 4-68 (DYYGLLGVAR…EKRRIVDMGG (65 aa)). Residues 133 to 215 (GVTKHLTVDT…CGGDGRVRAR (83 aa)) form a CR-type zinc finger. C146, C149, C163, C166, C189, C192, C203, and C206 together coordinate Zn(2+). 4 CXXCXGXG motif repeats span residues 146-153 (CDACHGSG), 163-170 (CETCGGAG), 189-196 (CPTCRGAG), and 203-210 (CHKCGGDG).

This sequence belongs to the DnaJ family. As to quaternary structure, homodimer. Requires Zn(2+) as cofactor.

Its subcellular location is the cytoplasm. Its function is as follows. Participates actively in the response to hyperosmotic and heat shock by preventing the aggregation of stress-denatured proteins and by disaggregating proteins, also in an autonomous, DnaK-independent fashion. Unfolded proteins bind initially to DnaJ; upon interaction with the DnaJ-bound protein, DnaK hydrolyzes its bound ATP, resulting in the formation of a stable complex. GrpE releases ADP from DnaK; ATP binding to DnaK triggers the release of the substrate protein, thus completing the reaction cycle. Several rounds of ATP-dependent interactions between DnaJ, DnaK and GrpE are required for fully efficient folding. Also involved, together with DnaK and GrpE, in the DNA replication of plasmids through activation of initiation proteins. This chain is Chaperone protein DnaJ 1, found in Nocardia farcinica (strain IFM 10152).